The sequence spans 341 residues: GTPase Obg (341 aa).

Positions 1–159 (MKFVDEALIK…RNLRLELRVL (159 aa)) constitute an Obg domain. A disordered region spans residues 128–150 (TRYKSSVNRSPRQTTPGSPGESR). Polar residues predominate over residues 129-144 (RYKSSVNRSPRQTTPG). One can recognise an OBG-type G domain in the interval 160–334 (ADVGLLGLPN…LCYALMQLID (175 aa)). GTP is bound by residues 166-173 (GLPNAGKS), 191-195 (FTTLH), 213-216 (DIPG), 283-286 (NKID), and 315-317 (SAI). Serine 173 and threonine 193 together coordinate Mg(2+).

Belongs to the TRAFAC class OBG-HflX-like GTPase superfamily. OBG GTPase family. In terms of assembly, monomer. Mg(2+) serves as cofactor.

The protein localises to the cytoplasm. An essential GTPase which binds GTP, GDP and possibly (p)ppGpp with moderate affinity, with high nucleotide exchange rates and a fairly low GTP hydrolysis rate. Plays a role in control of the cell cycle, stress response, ribosome biogenesis and in those bacteria that undergo differentiation, in morphogenesis control. The polypeptide is GTPase Obg (Legionella pneumophila (strain Lens)).